We begin with the raw amino-acid sequence, 196 residues long: Large ribosomal subunit protein uL6 (196 aa).

This sequence belongs to the universal ribosomal protein uL6 family. In terms of assembly, part of the 50S ribosomal subunit.

Its function is as follows. This protein binds to the 23S rRNA, and is important in its secondary structure. It is located near the subunit interface in the base of the L7/L12 stalk, and near the tRNA binding site of the peptidyltransferase center. This is Large ribosomal subunit protein uL6 from Archaeoglobus fulgidus (strain ATCC 49558 / DSM 4304 / JCM 9628 / NBRC 100126 / VC-16).